Consider the following 347-residue polypeptide: DNA-directed RNA polymerase subunit alpha (347 aa).

The alpha N-terminal domain (alpha-NTD) stretch occupies residues 1 to 226 (MLISQRPTLS…ELFGLARELN (226 aa)). Residues 241–347 (ADHIASFALP…DQDYAETEQL (107 aa)) are alpha C-terminal domain (alpha-CTD).

It belongs to the RNA polymerase alpha chain family. As to quaternary structure, homodimer. The RNAP catalytic core consists of 2 alpha, 1 beta, 1 beta' and 1 omega subunit. When a sigma factor is associated with the core the holoenzyme is formed, which can initiate transcription.

It carries out the reaction RNA(n) + a ribonucleoside 5'-triphosphate = RNA(n+1) + diphosphate. DNA-dependent RNA polymerase catalyzes the transcription of DNA into RNA using the four ribonucleoside triphosphates as substrates. This is DNA-directed RNA polymerase subunit alpha from Mycobacterium ulcerans (strain Agy99).